We begin with the raw amino-acid sequence, 500 residues long: Cryptochrome DASH (500 aa).

Residues 4-138 enclose the Photolyase/cryptochrome alpha/beta domain; sequence KTVLVWYRND…PVRSFWGTTL (135 aa).

Belongs to the DNA photolyase class-1 family. Requires FAD as cofactor. It depends on (6R)-5,10-methylene-5,6,7,8-tetrahydrofolate as a cofactor.

In terms of biological role, may have a photoreceptor function. Binds DNA; probably functions as a transcriptional repressor. The polypeptide is Cryptochrome DASH (cry) (Gloeobacter violaceus (strain ATCC 29082 / PCC 7421)).